A 325-amino-acid polypeptide reads, in one-letter code: MKVFDYEDVQLIPNKCIVNSRSECDTTVILGKHAFKMPIVPANMQTIINESIAEFLAENGYFYIMHRFNGSARIPFVKKMKERQLISSISVGVKKEECLFVEELAKQGLTPDYITIDIAHGHSNSVIEMIQRIKTRLPETFVIAGNVGTPEAVRELENAGADATKVGIGPGKVCITKIKTGFGTGGWQLAALRWCAKAARKPIIADGGIRTHGDIAKSIRFGATMVMIGSLFAGHEESSGETKIENGIAYKEYFGSASEFQKGEKKNIEGKKIWIQHKGSLKNTLIEMHQDLQSSISYAGGRDLEAIRKVDYVIVKNSIFNGDTI.

Cys174 (thioimidate intermediate) is an active-site residue. An NADP(+)-binding site is contributed by 203 to 226; sequence IIADGGIRTHGDIAKSIRFGATMV.

This sequence belongs to the IMPDH/GMPR family. GuaC type 2 subfamily.

The catalysed reaction is IMP + NH4(+) + NADP(+) = GMP + NADPH + 2 H(+). In terms of biological role, catalyzes the irreversible NADPH-dependent deamination of GMP to IMP. It functions in the conversion of nucleobase, nucleoside and nucleotide derivatives of G to A nucleotides, and in maintaining the intracellular balance of A and G nucleotides. This Helicobacter pylori (strain J99 / ATCC 700824) (Campylobacter pylori J99) protein is GMP reductase.